The chain runs to 237 residues: Cytosolic-abundant heat soluble protein 86272 (237 aa).

Positions 96 to 125 are disordered; it reads FKDQEKYSREQAAIARAHDKDLEKKTEEYR. Positions 111–125 are enriched in basic and acidic residues; sequence RAHDKDLEKKTEEYR. Positions 115–193 form a coiled coil; it reads KDLEKKTEEY…MNALEQSKMA (79 aa). CAHS motif stretches follow at residues 124 to 142 and 161 to 179; these read YRKTAEAEAEKIRKELEKQ and QKREVDLEAKYAKKELEHE. Residues 204–215 are compositionally biased toward low complexity; sequence AGTTVSGGTTVS. The tract at residues 204–237 is disordered; the sequence is AGTTVSGGTTVSEHTEVHDGKEKKSLGEKIKSLF. Residues 216–237 show a composition bias toward basic and acidic residues; it reads EHTEVHDGKEKKSLGEKIKSLF.

Belongs to the Cytosolic-abundant heat soluble protein (CAHS) family.

Its subcellular location is the cytoplasm. Its function is as follows. CAHS proteins are cytosolic heat soluble proteins that seem to contribute to the anhydrobiosis in tardigrades, but their specific mechanisms are yet to be identified. It is possible that protection during anhydrobiosis might occur via the stabilization of vitrifying small molecules such as sugars, but not via the direct glass transition of CAHS proteins themselves. This chain is Cytosolic-abundant heat soluble protein 86272, found in Hypsibius exemplaris (Freshwater tardigrade).